The following is an 83-amino-acid chain: Cytochrome c oxidase subunit 7A2, mitochondrial (83 aa).

A mitochondrion-targeting transit peptide spans 1-23 (MLRNLLALRQIGQRTISTASRRH). The Mitochondrial matrix portion of the chain corresponds to 24–48 (FKNKVPEKQKLFQEDDEIPLYLKGG). Residue lysine 33 is modified to N6-acetyllysine. The helical transmembrane segment at 49–77 (VADALLYRATMILTVGGTAYAIYELAVAS) threads the bilayer. The Mitochondrial intermembrane segment spans residues 78-83 (FPKKQE).

The protein belongs to the cytochrome c oxidase VIIa family. As to quaternary structure, component of the cytochrome c oxidase (complex IV, CIV), a multisubunit enzyme composed of 14 subunits. The complex is composed of a catalytic core of 3 subunits MT-CO1, MT-CO2 and MT-CO3, encoded in the mitochondrial DNA, and 11 supernumerary subunits COX4I1 (or COX4I2), COX5A, COX5B, COX6A1 (or COX6A2), COX6B1 (or COX6B2), COX6C, COX7A2 (or COX7A1), COX7B, COX7C, COX8A and NDUFA4, which are encoded in the nuclear genome. The complex exists as a monomer or a dimer and forms supercomplexes (SCs) in the inner mitochondrial membrane with NADH-ubiquinone oxidoreductase (complex I, CI) and ubiquinol-cytochrome c oxidoreductase (cytochrome b-c1 complex, complex III, CIII), resulting in different assemblies (supercomplex SCI(1)III(2)IV(1) and megacomplex MCI(2)III(2)IV(2)). Interacts with PET100.

It localises to the mitochondrion inner membrane. Its pathway is energy metabolism; oxidative phosphorylation. Its function is as follows. Component of the cytochrome c oxidase, the last enzyme in the mitochondrial electron transport chain which drives oxidative phosphorylation. The respiratory chain contains 3 multisubunit complexes succinate dehydrogenase (complex II, CII), ubiquinol-cytochrome c oxidoreductase (cytochrome b-c1 complex, complex III, CIII) and cytochrome c oxidase (complex IV, CIV), that cooperate to transfer electrons derived from NADH and succinate to molecular oxygen, creating an electrochemical gradient over the inner membrane that drives transmembrane transport and the ATP synthase. Cytochrome c oxidase is the component of the respiratory chain that catalyzes the reduction of oxygen to water. Electrons originating from reduced cytochrome c in the intermembrane space (IMS) are transferred via the dinuclear copper A center (CU(A)) of subunit 2 and heme A of subunit 1 to the active site in subunit 1, a binuclear center (BNC) formed by heme A3 and copper B (CU(B)). The BNC reduces molecular oxygen to 2 water molecules using 4 electrons from cytochrome c in the IMS and 4 protons from the mitochondrial matrix. This Homo sapiens (Human) protein is Cytochrome c oxidase subunit 7A2, mitochondrial (COX7A2).